We begin with the raw amino-acid sequence, 193 residues long: dCTP deaminase (193 aa).

Residues 110–115 (RSSLAR), Asp-128, 136–138 (VLE), Tyr-171, Lys-178, and Gln-182 each bind dCTP. The active-site Proton donor/acceptor is Glu-138. Residues 171–193 (YHQRQDAKYHNQKGAVASRIDKD) form a disordered region.

The protein belongs to the dCTP deaminase family. In terms of assembly, homotrimer.

The catalysed reaction is dCTP + H2O + H(+) = dUTP + NH4(+). Its pathway is pyrimidine metabolism; dUMP biosynthesis; dUMP from dCTP (dUTP route): step 1/2. Catalyzes the deamination of dCTP to dUTP. In Hamiltonella defensa subsp. Acyrthosiphon pisum (strain 5AT), this protein is dCTP deaminase.